The sequence spans 182 residues: Epididymal-specific lipocalin-10 (182 aa).

The first 19 residues, 1–19 (MKLEMALSIALALAVVSWT), serve as a signal peptide directing secretion. N31 and N144 each carry an N-linked (GlcNAc...) asparagine glycan. The cysteines at positions 85 and 176 are disulfide-linked. K165 carries the post-translational modification N6-acetyllysine.

It belongs to the calycin superfamily. Lipocalin family. As to expression, expressed in epididymis.

It is found in the secreted. Functionally, may play a role in male fertility. May act as a retinoid carrier protein within the epididymis. The polypeptide is Epididymal-specific lipocalin-10 (Lcn10) (Mus musculus (Mouse)).